The chain runs to 181 residues: HGPRTase-like protein 2 (181 aa).

This sequence belongs to the purine/pyrimidine phosphoribosyltransferase family. Archaeal HPRT subfamily.

In terms of biological role, may catalyze a purine salvage reaction, the substrate is unknown. The chain is HGPRTase-like protein 2 from Natrialba magadii (strain ATCC 43099 / DSM 3394 / CCM 3739 / CIP 104546 / IAM 13178 / JCM 8861 / NBRC 102185 / NCIMB 2190 / MS3) (Natronobacterium magadii).